The sequence spans 264 residues: Glutamate racemase (264 aa).

Substrate-binding positions include 10-11 (DS) and 42-43 (YG). C73 acts as the Proton donor/acceptor in catalysis. A substrate-binding site is contributed by 74–75 (NT). The active-site Proton donor/acceptor is C183. Residue 184–185 (TH) coordinates substrate.

It belongs to the aspartate/glutamate racemases family.

The enzyme catalyses L-glutamate = D-glutamate. The protein operates within cell wall biogenesis; peptidoglycan biosynthesis. Functionally, provides the (R)-glutamate required for cell wall biosynthesis. The polypeptide is Glutamate racemase (Streptococcus gordonii (strain Challis / ATCC 35105 / BCRC 15272 / CH1 / DL1 / V288)).